The following is a 520-amino-acid chain: Peptide chain release factor 3 (520 aa).

The 270-residue stretch at 8–277 folds into the tr-type G domain; that stretch reads ESRKTFAIIS…FAPMPNARQT (270 aa). GTP is bound by residues 17–24, 85–89, and 139–142; these read SHPDAGKT, DTPGH, and NKLD.

This sequence belongs to the TRAFAC class translation factor GTPase superfamily. Classic translation factor GTPase family. PrfC subfamily.

The protein localises to the cytoplasm. In terms of biological role, increases the formation of ribosomal termination complexes and stimulates activities of RF-1 and RF-2. It binds guanine nucleotides and has strong preference for UGA stop codons. It may interact directly with the ribosome. The stimulation of RF-1 and RF-2 is significantly reduced by GTP and GDP, but not by GMP. This is Peptide chain release factor 3 from Staphylococcus aureus (strain USA300 / TCH1516).